The sequence spans 184 residues: Peptidyl-tRNA hydrolase (184 aa).

Y14 serves as a coordination point for tRNA. The active-site Proton acceptor is the H19. TRNA contacts are provided by F64, N66, and N112.

This sequence belongs to the PTH family. Monomer.

It localises to the cytoplasm. The catalysed reaction is an N-acyl-L-alpha-aminoacyl-tRNA + H2O = an N-acyl-L-amino acid + a tRNA + H(+). Its function is as follows. Hydrolyzes ribosome-free peptidyl-tRNAs (with 1 or more amino acids incorporated), which drop off the ribosome during protein synthesis, or as a result of ribosome stalling. Catalyzes the release of premature peptidyl moieties from peptidyl-tRNA molecules trapped in stalled 50S ribosomal subunits, and thus maintains levels of free tRNAs and 50S ribosomes. The chain is Peptidyl-tRNA hydrolase from Listeria innocua serovar 6a (strain ATCC BAA-680 / CLIP 11262).